Consider the following 77-residue polypeptide: Conotoxin Ar5.1 a (77 aa).

Residues 1–19 form the signal peptide; the sequence is MLCLPVFIILLLLASPAAS. The propeptide occupies 20–44; the sequence is NPLETRIQSDLIRAALEDADMKNEK.

The protein belongs to the conotoxin T superfamily. Post-translationally, contains 2 disulfide bonds that can be either 'C1-C3, C2-C4' or 'C1-C4, C2-C3', since these disulfide connectivities have been observed for conotoxins with cysteine framework V (for examples, see AC P0DQQ7 and AC P81755). As to expression, expressed by the venom duct.

Its subcellular location is the secreted. This Conus arenatus (Sand-dusted cone) protein is Conotoxin Ar5.1 a.